Consider the following 351-residue polypeptide: DNA polymerase IV (351 aa).

The region spanning 4–185 is the UmuC domain; that stretch reads IIHVDMDCFF…LPLGKIPGVG (182 aa). Asp8 and Asp103 together coordinate Mg(2+). Residue Glu104 is part of the active site.

The protein belongs to the DNA polymerase type-Y family. As to quaternary structure, monomer. Mg(2+) is required as a cofactor.

The protein localises to the cytoplasm. The enzyme catalyses DNA(n) + a 2'-deoxyribonucleoside 5'-triphosphate = DNA(n+1) + diphosphate. Functionally, poorly processive, error-prone DNA polymerase involved in untargeted mutagenesis. Copies undamaged DNA at stalled replication forks, which arise in vivo from mismatched or misaligned primer ends. These misaligned primers can be extended by PolIV. Exhibits no 3'-5' exonuclease (proofreading) activity. May be involved in translesional synthesis, in conjunction with the beta clamp from PolIII. The polypeptide is DNA polymerase IV (Cronobacter sakazakii (strain ATCC BAA-894) (Enterobacter sakazakii)).